Reading from the N-terminus, the 130-residue chain is Small ribosomal subunit protein uS11 (130 aa).

This sequence belongs to the universal ribosomal protein uS11 family. As to quaternary structure, part of the 30S ribosomal subunit. Interacts with proteins S7 and S18. Binds to IF-3.

Functionally, located on the platform of the 30S subunit, it bridges several disparate RNA helices of the 16S rRNA. Forms part of the Shine-Dalgarno cleft in the 70S ribosome. The protein is Small ribosomal subunit protein uS11 of Xylella fastidiosa (strain M23).